A 312-amino-acid chain; its full sequence is Elongation factor Ts (312 aa).

Residues 84 to 87 (TDFV) are involved in Mg(2+) ion dislocation from EF-Tu.

This sequence belongs to the EF-Ts family.

The protein resides in the cytoplasm. Functionally, associates with the EF-Tu.GDP complex and induces the exchange of GDP to GTP. It remains bound to the aminoacyl-tRNA.EF-Tu.GTP complex up to the GTP hydrolysis stage on the ribosome. This is Elongation factor Ts from Caulobacter vibrioides (strain ATCC 19089 / CIP 103742 / CB 15) (Caulobacter crescentus).